The sequence spans 2395 residues: Helicase ssl-1 (2395 aa).

Low complexity predominate over residues 1–12; that stretch reads MPATPVRASSTR. The tract at residues 1-62 is disordered; the sequence is MPATPVRASS…EKKKKKTSDD (62 aa). In terms of domain architecture, HSA spans 227-300; the sequence is LPKCVEPERN…IKEKRKMCAG (74 aa). The segment covering 354–363 has biased composition (polar residues); sequence LVSSSKSPSI. Disordered stretches follow at residues 354-404 and 444-504; these read LVSS…VRQE and EKLE…HGVL. 3 stretches are compositionally biased toward basic and acidic residues: residues 365–375, 394–404, and 444–462; these read SDRDDKDEEFK, KSQKKEDVRQE, and EKLE…NEEK. Positions 388-464 form a coiled coil; that stretch reads TIANAEKSQK…ACGDNEEKME (77 aa). Over residues 470 to 490 the composition is skewed to polar residues; sequence SSDAQKPSTSSSDLTAEQLQD. The region spanning 570 to 735 is the Helicase ATP-binding domain; it reads VTLYEKNLNG…WSLMHFLMPT (166 aa). 583–590 serves as a coordination point for ATP; that stretch reads DEMGLGKT. A disordered region spans residues 963–982; the sequence is AQPLQNGNSIPQNAPNRPQT. One can recognise a Helicase C-terminal domain in the interval 1196 to 1342; the sequence is LLRQLYLYKH…ELAIDEAGFT (147 aa). Residues 1452–1476 are a coiled coil; sequence KPEFEEECKEAEALIDQKREEWDKN. 5 disordered regions span residues 1615 to 1706, 1977 to 2073, 2092 to 2143, 2276 to 2306, and 2350 to 2395; these read ESAA…EEPD, SIQH…RRNA, QSGK…PQQR, QMRS…RPLV, and MQMP…PPQN. 2 stretches are compositionally biased toward low complexity: residues 1647 to 1669 and 1981 to 1995; these read QQPT…QQQQ and LQSS…QNLQ. The span at 1996 to 2019 shows a compositional bias: polar residues; that stretch reads NSHNSEQRNNVQNMHQNQYNSSQN. Composition is skewed to low complexity over residues 2051 to 2073 and 2092 to 2114; these read LVQQ…RRNA and QSGK…SSND. The span at 2115–2129 shows a compositional bias: gly residues; sequence GQGGASTVGGGGGGS. The span at 2130–2142 shows a compositional bias: low complexity; that stretch reads QQPHQQQQQQPQQ. Residues 2281–2299 are compositionally biased toward gly residues; sequence NGGGVGGQGGLQGGPGGPQ. A compositionally biased stretch (low complexity) spans 2361–2377; it reads QQQAPPQSSQQASQQAP.

This sequence belongs to the SNF2/RAD54 helicase family. SWR1 subfamily.

It localises to the nucleus. In terms of biological role, probable catalytic component of a chromatin-remodeling complex which mediates the ATP-dependent exchange of histone H2A variant H2AV/htz-1 for H2A, leading to transcriptional regulation of selected genes by chromatin remodeling. Involved in foregut development, and may be involved in vulval development. This is Helicase ssl-1 (ssl-1) from Caenorhabditis elegans.